Reading from the N-terminus, the 505-residue chain is AMP phosphorylase (505 aa).

Residues Gly170, 196 to 201 (SRAITS), and Thr205 contribute to the AMP site. Asp258 functions as the Proton donor in the catalytic mechanism. AMP-binding residues include Ser266 and Lys290.

Belongs to the thymidine/pyrimidine-nucleoside phosphorylase family. Type 2 subfamily.

It catalyses the reaction AMP + phosphate = alpha-D-ribose 1,5-bisphosphate + adenine. It carries out the reaction CMP + phosphate = cytosine + alpha-D-ribose 1,5-bisphosphate. The enzyme catalyses UMP + phosphate = alpha-D-ribose 1,5-bisphosphate + uracil. In terms of biological role, catalyzes the conversion of AMP and phosphate to adenine and ribose 1,5-bisphosphate (R15P). Exhibits phosphorylase activity toward CMP and UMP in addition to AMP. Functions in an archaeal AMP degradation pathway, together with R15P isomerase and RubisCO. In Methanococcus maripaludis (strain C6 / ATCC BAA-1332), this protein is AMP phosphorylase.